The primary structure comprises 57 residues: Probable antitoxin MazE1 (57 aa).

Forms a complex with cognate toxin MazF1.

In terms of biological role, antitoxin component of a type II toxin-antitoxin (TA) system. The sequence is that of Probable antitoxin MazE1 (mazE1) from Mycobacterium tuberculosis (strain ATCC 25618 / H37Rv).